The chain runs to 233 residues: MIEFGKKAVPRAAMPDTVRSDSGMTAGAMATLAQSAASTHAYYDTTFSRRAMKVLPGEYYVTTEDLMLVTVLGSCVSACVRDKLLGIGGMNHFMLPSRNESESILSPSMRYGTHAMEVLLNQLYRAGARREHLEIKVFGGAAVLAGMSTLDVGERNGKFVLEFLRSEGLPVAAKDLFDVHPRKVYFVPSTGQIMVRKLRSQGSAAELDSEAQYASKLSRSIADKPASRLQLFT.

This sequence belongs to the CheD family.

The enzyme catalyses L-glutaminyl-[protein] + H2O = L-glutamyl-[protein] + NH4(+). In terms of biological role, probably deamidates glutamine residues to glutamate on methyl-accepting chemotaxis receptors (MCPs), playing an important role in chemotaxis. The sequence is that of Probable chemoreceptor glutamine deamidase CheD from Ralstonia nicotianae (strain ATCC BAA-1114 / GMI1000) (Ralstonia solanacearum).